Reading from the N-terminus, the 423-residue chain is Glycine amidinotransferase, mitochondrial (423 aa).

Residues 1 to 43 (MLRVRCLRGGSRGAEAVHYIGSRLGGSLTGWVQRTFQSTQAAT) constitute a mitochondrion transit peptide. Phosphoserine is present on residues S46 and S49. Arginine is bound at residue D170. Residues D254 and H303 contribute to the active site. D305, R322, S354, and S355 together coordinate arginine. Residue K385 is modified to N6-acetyllysine. C407 serves as the catalytic Amidino-cysteine intermediate.

The protein belongs to the amidinotransferase family. In terms of assembly, homodimer. As to expression, expressed in kidney, brain, gonads, uterus, and embryonic head, chest and abdomen. Maternally expressed in the placenta and yolk sac of embryos.

It localises to the mitochondrion inner membrane. It catalyses the reaction L-arginine + glycine = guanidinoacetate + L-ornithine. It carries out the reaction 4-aminobutanoate + L-arginine = 4-guanidinobutanoate + L-ornithine. The enzyme catalyses beta-alanine + L-arginine = 3-guanidinopropanoate + L-ornithine. The catalysed reaction is taurine + L-arginine = taurocyamine + L-ornithine. It functions in the pathway amine and polyamine biosynthesis; creatine biosynthesis; creatine from L-arginine and glycine: step 1/2. Its function is as follows. Transamidinase that catalyzes the transfer of the amidino group of L-arginine onto the amino moiety of acceptor metabolites such as glycine, beta-alanine, gamma-aminobutyric acid (GABA) and taurine yielding the corresponding guanidine derivatives. Catalyzes the rate-limiting step of creatine biosynthesis, namely the transfer of the amidino group from L-arginine to glycine to generate guanidinoacetate, which is then methylated by GAMT to form creatine. Provides creatine as a source for ATP generation in tissues with high energy demands, in particular skeletal muscle, heart and brain. The sequence is that of Glycine amidinotransferase, mitochondrial (Gatm) from Mus musculus (Mouse).